A 914-amino-acid chain; its full sequence is Calcium-activated chloride channel regulator 1 (914 aa).

Residues 1–21 (MGPFKSSVFILILHLLEGALS) form the signal peptide. The tract at residues 46-199 (DETLIQQIKD…GITGTNVVKK (154 aa)) is metalloprotease domain. His-156 serves as a coordination point for Zn(2+). Glu-157 is an active-site residue. Zn(2+) contacts are provided by His-160 and Asp-167. A VWFA domain is found at 306 to 475 (IVCLVLDKSG…NGLIDAFGAL (170 aa)). Asn-503, Asn-585, Asn-770, Asn-804, Asn-810, Asn-831, Asn-836, and Asn-890 each carry an N-linked (GlcNAc...) asparagine glycan.

It belongs to the CLCR family. In terms of processing, glycosylated. Post-translationally, the 125-kDa product is autoproteolytically processed by the metalloprotease domain and yields to two cell-surface-associated subunits, a 90-kDa protein and a group of 37- to 41-kDa proteins. The cleavage is necessary for calcium-activated chloride channel (CaCC) activation activity. As to expression, highly expressed in small intestine and colon namely in intestinal basal crypt epithelia and goblet cells, and appendix. Weakly expressed in uterus, testis and kidney. Expressed in the airways epithelium of both asthmatic and healthy patients. Expressed in the bronchial epithelium, especially in mucus-producing goblet cells. Expressed in normal turbinate mucosa and nasal polyp. Expressed in.

The protein resides in the secreted. It is found in the extracellular space. Its subcellular location is the cell membrane. May be involved in mediating calcium-activated chloride conductance. May play critical roles in goblet cell metaplasia, mucus hypersecretion, cystic fibrosis and AHR. May be involved in the regulation of mucus production and/or secretion by goblet cells. Involved in the regulation of tissue inflammation in the innate immune response. May play a role as a tumor suppressor. Induces MUC5AC. This Homo sapiens (Human) protein is Calcium-activated chloride channel regulator 1 (CLCA1).